Consider the following 2286-residue polypeptide: Non-reducing polyketide synthase fsr1 (2286 aa).

The N-terminal acylcarrier protein transacylase domain (SAT) stretch occupies residues 7 to 342; it reads LYLFGDQTFD…IYTALKKTSL (336 aa). Residues 368–805 enclose the Ketosynthase family 3 (KS3) domain; it reads KPKLAIVAMS…GGNSALLIQD (438 aa). Catalysis depends on for beta-ketoacyl synthase activity residues Cys540, His675, and His722. Residues 905-1195 are acyl/malonyl transferases; it reads VFTFTGQGAQ…GMVKPTLGQQ (291 aa). Ser996 functions as the For acyl/malonyl transferase activity in the catalytic mechanism. The N-terminal hotdog fold stretch occupies residues 1285–1417; sequence HSVVEESGDS…CVVLFKDRSH (133 aa). Residues 1285–1591 form the PKS/mFAS DH domain; it reads HSVVEESGDS…IQGVPRRVLK (307 aa). The tract at residues 1296–1588 is product template (PT) domainn; the sequence is KTGIVVEADI…QIAIQGVPRR (293 aa). His1317 serves as the catalytic Proton acceptor; for dehydratase activity. A C-terminal hotdog fold region spans residues 1444–1591; the sequence is SARFNRPMAY…IQGVPRRVLK (148 aa). Asp1504 acts as the Proton donor; for dehydratase activity in catalysis. A disordered region spans residues 1600–1639; sequence KKGQPQRQTQDKPRNTPSQTKDSTPKPAQNKPAAKVEPPK. In terms of domain architecture, Carrier 1 spans 1637–1712; the sequence is PPKFSTAIRI…DLRAFLGADE (76 aa). Position 1671 is an O-(pantetheine 4'-phosphoryl)serine (Ser1671). Residues 1716–1735 form a disordered region; sequence ESSSSAASDSGRDTTTTGSA. The region spanning 1748–1823 is the Carrier 2 domain; that stretch reads EVEFERALEI…DLKTMLAREM (76 aa). At Ser1782 the chain carries O-(pantetheine 4'-phosphoryl)serine. The interval 1897–2145 is reductase (R) domain; the sequence is VTGASGGLGS…NWTPVNDIAD (249 aa).

It participates in polyketide biosynthesis. Functionally, non-reducing polyketide synthase; part of the gene cluster that mediates the biosynthesis of fusarubins, highly pigmented naphthoquinones responsible for the coloration of the fruiting bodies. The non-reducing polyketide synthase FSR1 is responsible for the condensation of seven acetyl-CoA units to yield a haptaketide. After rings A and B are formed by aldol-type cyclization, the PKS-derived product is released as 6-O-demethylfusarubinaldehyde. Then, two hydroxyl groups at C-5 and C-10 are incorporated by FSR3, and simultaneously hydroxyl groups at C-6 and C-8 are methylated by FSR2. The aldehyde is, on the one hand, reduced by FSR3 to 8-O-methylfusarubin alcohol, which equilibrates mainly with 8-O-methylfusarubin and only small amounts of 8-O-methylnectriafurone. On the other hand, the aldehyde can be oxidized to form 8-O-methylfusarubinic acid, a reaction driven by FSR3 equilibrating with 8-O-methylfusarubinlactone, finally resulting in 8-O-methylanhydrofusarubinlactol after a further reduction step and loss of water. 8-O-Methylfusarubinic acid can also undergo decarboxylation, resulting in 8-O-methyl-13-hydroxynorjavanicin after another hydroxylation step at C-13. Both steps are most likely also accomplished by FSR3. No enzymatic function has been determined so far for either FSR4 and FSR5. Their deletion does not alter the product spectrum, but the possibility that they catalyze specific enzymatic steps during perithecium development cannot be ruled out. FSR4 might possess a regulatory function in the biosynthesis of fusarubins. The chain is Non-reducing polyketide synthase fsr1 from Gibberella fujikuroi (strain CBS 195.34 / IMI 58289 / NRRL A-6831) (Bakanae and foot rot disease fungus).